The following is a 148-amino-acid chain: Small ribosomal subunit protein uS15 (148 aa).

A compositionally biased stretch (basic residues) spans 1-14 (MGRLHSHRHGKSHS). The tract at residues 1-27 (MGRLHSHRHGKSHSIRPSSPKAPSWIQ) is disordered.

The protein belongs to the universal ribosomal protein uS15 family. Part of the 30S ribosomal subunit.

This chain is Small ribosomal subunit protein uS15, found in Cenarchaeum symbiosum (strain A).